The following is a 204-amino-acid chain: ADP-ribosylation factor-like protein 15 (204 aa).

GTP is bound by residues 39-46 (GLTGSGKT), 82-86 (ELGGA), and 142-145 (NHQD).

Belongs to the small GTPase superfamily. Arf family.

The chain is ADP-ribosylation factor-like protein 15 (ARL15) from Pongo abelii (Sumatran orangutan).